The sequence spans 340 residues: Cathepsin S (340 aa).

The first 17 residues, 1–17 (MRAPGHAAIRWLFWMPL), serve as a signal peptide directing secretion. A propeptide spans 18–122 (VCSVAMEQLQ…VTFRSYSNRT (105 aa)) (activation peptide). A glycan (N-linked (GlcNAc...) asparagine) is linked at asparagine 120. Disulfide bonds link cysteine 134–cysteine 233, cysteine 144–cysteine 189, cysteine 178–cysteine 222, and cysteine 281–cysteine 329. Residue cysteine 147 is part of the active site. Active-site residues include histidine 287 and asparagine 307.

Belongs to the peptidase C1 family. In terms of tissue distribution, widely expressed with highest expression found in non-skeletal tissues. Relatively high levels found in skeletal tissues. Expressed in spleen, B cells, dendritic cells and macrophages.

The protein localises to the lysosome. It localises to the secreted. It is found in the cytoplasmic vesicle. Its subcellular location is the phagosome. It carries out the reaction Similar to cathepsin L, but with much less activity on Z-Phe-Arg-|-NHMec, and more activity on the Z-Val-Val-Arg-|-Xaa compound.. Functionally, thiol protease. Key protease responsible for the removal of the invariant chain from MHC class II molecules and MHC class II antigen presentation. The bond-specificity of this proteinase is in part similar to the specificities of cathepsin L. This chain is Cathepsin S (Ctss), found in Mus musculus (Mouse).